A 445-amino-acid polypeptide reads, in one-letter code: Transcription activator AFTR-1 (445 aa).

The zn(2)-C6 fungal-type DNA-binding region spans 17–44 (CDFCTQSKLRCNKNKPSCRRCTLQQQPC). Positions 50–89 (RRTGRPPKHPRKANDCQEANGQHGDQDPVTSTPGGSYQQQ) are disordered. A compositionally biased stretch (basic residues) spans 51 to 60 (RTGRPPKHPR). The segment covering 77-89 (PVTSTPGGSYQQQ) has biased composition (polar residues).

Its subcellular location is the nucleus. In terms of biological role, transcription factor that regulates the expression of the gene clusters that mediate the biosynthesis of the host-selective toxins (HSTs) AF-toxins responsible for Alternaria black spot of strawberry disease by the strawberry pathotype. On cellular level, AF-toxins affect plasma membrane of susceptible cells and cause a sudden increase in loss of K(+) after a few minutes of toxin treatment. In Alternaria alternata (Alternaria rot fungus), this protein is Transcription activator AFTR-1.